The primary structure comprises 774 residues: Probable E3 ubiquitin-protein ligase HECTD2 (774 aa).

The tract at residues 1 to 51 is disordered; the sequence is MSEAARDLSPGAPPAVAAAAPEERKGKEPEREKLPPIVTAGAAAGLDRGSK. Serine 9 is modified (phosphoserine). The segment covering 21–34 has biased composition (basic and acidic residues); that stretch reads PEERKGKEPEREKL. In terms of domain architecture, HECT spans 435–774; that stretch reads KRADLKKKLK…ISNSEGFGLE (340 aa). Cysteine 742 functions as the Glycyl thioester intermediate in the catalytic mechanism.

It catalyses the reaction S-ubiquitinyl-[E2 ubiquitin-conjugating enzyme]-L-cysteine + [acceptor protein]-L-lysine = [E2 ubiquitin-conjugating enzyme]-L-cysteine + N(6)-ubiquitinyl-[acceptor protein]-L-lysine.. Its pathway is protein modification; protein ubiquitination. In terms of biological role, E3 ubiquitin-protein ligase which accepts ubiquitin from an E2 ubiquitin-conjugating enzyme in the form of a thioester and then directly transfers the ubiquitin to targeted substrates. In Mus musculus (Mouse), this protein is Probable E3 ubiquitin-protein ligase HECTD2 (Hectd2).